The primary structure comprises 281 residues: Pantothenate synthetase (281 aa).

30–37 (MGYLHEGH) provides a ligand contact to ATP. The active-site Proton donor is H37. Q61 is a binding site for (R)-pantoate. Q61 contributes to the beta-alanine binding site. 147 to 150 (GEKD) provides a ligand contact to ATP. Q153 is a (R)-pantoate binding site. ATP-binding positions include I176 and 184-187 (KSSR).

Belongs to the pantothenate synthetase family. In terms of assembly, homodimer.

The protein localises to the cytoplasm. The catalysed reaction is (R)-pantoate + beta-alanine + ATP = (R)-pantothenate + AMP + diphosphate + H(+). Its pathway is cofactor biosynthesis; (R)-pantothenate biosynthesis; (R)-pantothenate from (R)-pantoate and beta-alanine: step 1/1. In terms of biological role, catalyzes the condensation of pantoate with beta-alanine in an ATP-dependent reaction via a pantoyl-adenylate intermediate. This chain is Pantothenate synthetase, found in Clostridium botulinum (strain 657 / Type Ba4).